The following is a 694-amino-acid chain: Transcriptional activator HAA1 (694 aa).

Residues 1-40 (MVLINGIKYACERCIRGHRVTTCNHTDQPLMMIKPKGRPS) constitute a DNA-binding region (copper-fist). Zn(2+)-binding residues include Cys-11, Cys-14, Cys-23, and His-25. Disordered regions lie at residues 104–128 (QKRHLRKSPSSSQKKGRSISRSQPM) and 209–240 (FNFLTGNINETNQNHSNHQHSKSGNNWQDSSV). The segment covering 111 to 126 (SPSSSQKKGRSISRSQ) has biased composition (polar residues). 4 positions are modified to phosphoserine: Ser-125, Ser-231, Ser-241, and Ser-291. Disordered stretches follow at residues 332–388 (FDIN…NGLF), 479–514 (EKERETERSPSSNYITDRPFTRKPRSSSIDVNHRYP), 566–588 (SSIHSVPQSINSPRMPKTGSRQD), and 650–677 (MISTPSGRNDLPDTSPMSSIQTASPPSQ). The segment covering 336–349 (DNCNRINSKSYSKT) has biased composition (polar residues). Low complexity predominate over residues 350 to 378 (NSMNGNGMNNSNNNNINSNGNDKNNNNSS). Polar residues-rich tracts occupy residues 566–577 (SSIHSVPQSINS) and 664–677 (SPMSSIQTASPPSQ).

The protein localises to the nucleus. In terms of biological role, regulates the transcription of a set of genes, many of which encode membrane proteins. Among the genes regulated are YGR138C and YRO2. Does not seem to be dependent on copper. This chain is Transcriptional activator HAA1 (HAA1), found in Saccharomyces cerevisiae (strain ATCC 204508 / S288c) (Baker's yeast).